A 1039-amino-acid chain; its full sequence is Error-prone DNA polymerase (1039 aa).

Belongs to the DNA polymerase type-C family. DnaE2 subfamily.

The protein resides in the cytoplasm. It carries out the reaction DNA(n) + a 2'-deoxyribonucleoside 5'-triphosphate = DNA(n+1) + diphosphate. In terms of biological role, DNA polymerase involved in damage-induced mutagenesis and translesion synthesis (TLS). It is not the major replicative DNA polymerase. The polypeptide is Error-prone DNA polymerase (Corynebacterium diphtheriae (strain ATCC 700971 / NCTC 13129 / Biotype gravis)).